Here is a 434-residue protein sequence, read N- to C-terminus: SPARC-related modular calcium-binding protein 1 (434 aa).

Positions 1 to 26 (MLPARCARLLTPHLLLVLVQLSPARG) are cleaved as a signal peptide. The region spanning 37–89 (SDRDPQCNLHCSRTQPKPICASDGRSYESMCEYQRAKCRDPTLGVVHRGRCKD) is the Kazal-like domain. Intrachain disulfides connect Cys-43-Cys-74, Cys-47-Cys-67, Cys-56-Cys-87, Cys-95-Cys-118, Cys-129-Cys-136, and Cys-138-Cys-158. The Thyroglobulin type-1 1 domain maps to 92-158 (QSKCRLERAQ…SSVQNKTPVC (67 aa)). Positions 149–172 (SSVQNKTPVCSGSVTDKPLSQGNS) are enriched in polar residues. The tract at residues 149–191 (SSVQNKTPVCSGSVTDKPLSQGNSGRKDDGSKPTPTMETQPVF) is disordered. Asn-214 carries N-linked (GlcNAc...) asparagine glycosylation. The region spanning 224–292 (VYSCDQERQS…TSTRYVMPSC (69 aa)) is the Thyroglobulin type-1 2 domain. 3 disulfides stabilise this stretch: Cys-227–Cys-251, Cys-262–Cys-269, and Cys-271–Cys-292. 2 EF-hand domains span residues 359–394 (LEER…VKKK) and 396–431 (KPKK…SKEG). Residues Asp-372, Asn-374, Ser-376, Asp-378, Glu-383, Asp-409, Asn-411, Asp-413, and Glu-420 each coordinate Ca(2+). A glycan (N-linked (GlcNAc...) asparagine) is linked at Asn-374.

Post-translationally, glycosylated. In terms of tissue distribution, widely expressed in many tissues with a strongest signal in ovary. No expression in spleen.

The protein localises to the secreted. Its subcellular location is the extracellular space. It localises to the extracellular matrix. It is found in the basement membrane. Plays essential roles in both eye and limb development. Probable regulator of osteoblast differentiation. This Homo sapiens (Human) protein is SPARC-related modular calcium-binding protein 1 (SMOC1).